Here is a 498-residue protein sequence, read N- to C-terminus: Lysine--tRNA ligase (498 aa).

2 residues coordinate Mg(2+): glutamate 411 and glutamate 418.

Belongs to the class-II aminoacyl-tRNA synthetase family. In terms of assembly, homodimer. Mg(2+) serves as cofactor.

The protein resides in the cytoplasm. The enzyme catalyses tRNA(Lys) + L-lysine + ATP = L-lysyl-tRNA(Lys) + AMP + diphosphate. The protein is Lysine--tRNA ligase of Enterococcus faecalis (strain ATCC 700802 / V583).